The following is a 359-amino-acid chain: DNA polymerase IV (359 aa).

Positions 4–184 (IVHVDMDAFY…LKVNRIPGVG (181 aa)) constitute a UmuC domain. Mg(2+)-binding residues include aspartate 8 and aspartate 102. The active site involves glutamate 103.

It belongs to the DNA polymerase type-Y family. As to quaternary structure, monomer. Mg(2+) is required as a cofactor.

It localises to the cytoplasm. The enzyme catalyses DNA(n) + a 2'-deoxyribonucleoside 5'-triphosphate = DNA(n+1) + diphosphate. In terms of biological role, poorly processive, error-prone DNA polymerase involved in untargeted mutagenesis. Copies undamaged DNA at stalled replication forks, which arise in vivo from mismatched or misaligned primer ends. These misaligned primers can be extended by PolIV. Exhibits no 3'-5' exonuclease (proofreading) activity. May be involved in translesional synthesis, in conjunction with the beta clamp from PolIII. The protein is DNA polymerase IV of Xanthomonas oryzae pv. oryzae (strain MAFF 311018).